The chain runs to 394 residues: Phosphoglycerate kinase (394 aa).

Substrate-binding positions include 21–23 (DLN), Arg37, 60–63 (HLGR), Arg115, and Arg148. ATP-binding positions include Lys199, Glu321, and 347 to 350 (GGDT).

The protein belongs to the phosphoglycerate kinase family. In terms of assembly, monomer.

It is found in the cytoplasm. It carries out the reaction (2R)-3-phosphoglycerate + ATP = (2R)-3-phospho-glyceroyl phosphate + ADP. It functions in the pathway carbohydrate degradation; glycolysis; pyruvate from D-glyceraldehyde 3-phosphate: step 2/5. This chain is Phosphoglycerate kinase, found in Aromatoleum aromaticum (strain DSM 19018 / LMG 30748 / EbN1) (Azoarcus sp. (strain EbN1)).